We begin with the raw amino-acid sequence, 210 residues long: 2-hydroxy-3-keto-5-methylthiopentenyl-1-phosphate phosphatase (210 aa).

It belongs to the HAD-like hydrolase superfamily. MtnX family.

It catalyses the reaction 2-hydroxy-5-methylsulfanyl-3-oxopent-1-enyl phosphate + H2O = 1,2-dihydroxy-5-(methylsulfanyl)pent-1-en-3-one + phosphate. The protein operates within amino-acid biosynthesis; L-methionine biosynthesis via salvage pathway; L-methionine from S-methyl-5-thio-alpha-D-ribose 1-phosphate: step 4/6. Dephosphorylates 2-hydroxy-3-keto-5-methylthiopentenyl-1-phosphate (HK-MTPenyl-1-P) yielding 1,2-dihydroxy-3-keto-5-methylthiopentene (DHK-MTPene). The polypeptide is 2-hydroxy-3-keto-5-methylthiopentenyl-1-phosphate phosphatase (Microcystis aeruginosa).